We begin with the raw amino-acid sequence, 444 residues long: N-succinylarginine dihydrolase (444 aa).

Residues 19 to 28 (SGLSVGNIAS), Asn110, and 137 to 138 (HR) contribute to the substrate site. Glu174 is a catalytic residue. Arg214 contacts substrate. The active site involves His250. Asp252 and Asn362 together coordinate substrate. Catalysis depends on Cys368, which acts as the Nucleophile.

Belongs to the succinylarginine dihydrolase family. As to quaternary structure, homodimer.

The enzyme catalyses N(2)-succinyl-L-arginine + 2 H2O + 2 H(+) = N(2)-succinyl-L-ornithine + 2 NH4(+) + CO2. The protein operates within amino-acid degradation; L-arginine degradation via AST pathway; L-glutamate and succinate from L-arginine: step 2/5. In terms of biological role, catalyzes the hydrolysis of N(2)-succinylarginine into N(2)-succinylornithine, ammonia and CO(2). The chain is N-succinylarginine dihydrolase from Aliivibrio fischeri (strain ATCC 700601 / ES114) (Vibrio fischeri).